Reading from the N-terminus, the 508-residue chain is UDP-N-acetylmuramoyl-L-alanyl-D-glutamate--2,6-diaminopimelate ligase (508 aa).

Ser33 contributes to the UDP-N-acetyl-alpha-D-muramoyl-L-alanyl-D-glutamate binding site. 121-127 (GTNGKST) contacts ATP. UDP-N-acetyl-alpha-D-muramoyl-L-alanyl-D-glutamate-binding positions include Asn162, 163–164 (TT), Ser190, Gln196, and Arg198. At Lys230 the chain carries N6-carboxylysine. Residues Arg399, 423–426 (DNPR), Gly474, and Glu478 each bind meso-2,6-diaminopimelate. The Meso-diaminopimelate recognition motif motif lies at 423 to 426 (DNPR).

This sequence belongs to the MurCDEF family. MurE subfamily. Mg(2+) serves as cofactor. Carboxylation is probably crucial for Mg(2+) binding and, consequently, for the gamma-phosphate positioning of ATP.

It is found in the cytoplasm. The catalysed reaction is UDP-N-acetyl-alpha-D-muramoyl-L-alanyl-D-glutamate + meso-2,6-diaminopimelate + ATP = UDP-N-acetyl-alpha-D-muramoyl-L-alanyl-gamma-D-glutamyl-meso-2,6-diaminopimelate + ADP + phosphate + H(+). Its pathway is cell wall biogenesis; peptidoglycan biosynthesis. In terms of biological role, catalyzes the addition of meso-diaminopimelic acid to the nucleotide precursor UDP-N-acetylmuramoyl-L-alanyl-D-glutamate (UMAG) in the biosynthesis of bacterial cell-wall peptidoglycan. This Buchnera aphidicola subsp. Baizongia pistaciae (strain Bp) protein is UDP-N-acetylmuramoyl-L-alanyl-D-glutamate--2,6-diaminopimelate ligase.